Consider the following 407-residue polypeptide: Phosphopentomutase (407 aa).

Residues D10, D306, H311, D347, H348, and H359 each contribute to the Mn(2+) site.

This sequence belongs to the phosphopentomutase family. The cofactor is Mn(2+).

It localises to the cytoplasm. The catalysed reaction is 2-deoxy-alpha-D-ribose 1-phosphate = 2-deoxy-D-ribose 5-phosphate. It catalyses the reaction alpha-D-ribose 1-phosphate = D-ribose 5-phosphate. It functions in the pathway carbohydrate degradation; 2-deoxy-D-ribose 1-phosphate degradation; D-glyceraldehyde 3-phosphate and acetaldehyde from 2-deoxy-alpha-D-ribose 1-phosphate: step 1/2. Isomerase that catalyzes the conversion of deoxy-ribose 1-phosphate (dRib-1-P) and ribose 1-phosphate (Rib-1-P) to deoxy-ribose 5-phosphate (dRib-5-P) and ribose 5-phosphate (Rib-5-P), respectively. The polypeptide is Phosphopentomutase (Shigella dysenteriae serotype 1 (strain Sd197)).